Here is a 376-residue protein sequence, read N- to C-terminus: Succinyl-diaminopimelate desuccinylase (376 aa).

His-67 provides a ligand contact to Zn(2+). Asp-69 is an active-site residue. Residue Asp-100 participates in Zn(2+) binding. Glu-134 acts as the Proton acceptor in catalysis. Residues Glu-135, Glu-163, and His-349 each contribute to the Zn(2+) site.

This sequence belongs to the peptidase M20A family. DapE subfamily. As to quaternary structure, homodimer. The cofactor is Zn(2+). Co(2+) serves as cofactor.

The enzyme catalyses N-succinyl-(2S,6S)-2,6-diaminopimelate + H2O = (2S,6S)-2,6-diaminopimelate + succinate. Its pathway is amino-acid biosynthesis; L-lysine biosynthesis via DAP pathway; LL-2,6-diaminopimelate from (S)-tetrahydrodipicolinate (succinylase route): step 3/3. Functionally, catalyzes the hydrolysis of N-succinyl-L,L-diaminopimelic acid (SDAP), forming succinate and LL-2,6-diaminopimelate (DAP), an intermediate involved in the bacterial biosynthesis of lysine and meso-diaminopimelic acid, an essential component of bacterial cell walls. In Shewanella denitrificans (strain OS217 / ATCC BAA-1090 / DSM 15013), this protein is Succinyl-diaminopimelate desuccinylase.